The following is a 210-amino-acid chain: MSGFQAQLILLSLVSYVIGSIPFGLLLTAVAGGGDIRKIGSGNIGATNVLRTGRRGLAAATLLLDALKGALAVLIARFFFPGASETTMAVAAVAVVIGHCFPVWLGFRGGKGVATGLGTIWVLCWPVGLACCVVWLLVARLSRISSAGALAAFLLAPGLMVLLSGRPLHTPIPVATLLISLLIWARHSSNIARLVTGREPRVKVDQASRR.

The next 6 membrane-spanning stretches (helical) occupy residues Leu8–Thr28, Gly56–Ala76, Thr87–Phe107, Thr119–Ala139, Ile144–Ser164, and Gly165–Ala185.

The protein belongs to the PlsY family. In terms of assembly, probably interacts with PlsX.

It localises to the cell inner membrane. The catalysed reaction is an acyl phosphate + sn-glycerol 3-phosphate = a 1-acyl-sn-glycero-3-phosphate + phosphate. Its pathway is lipid metabolism; phospholipid metabolism. Catalyzes the transfer of an acyl group from acyl-phosphate (acyl-PO(4)) to glycerol-3-phosphate (G3P) to form lysophosphatidic acid (LPA). This enzyme utilizes acyl-phosphate as fatty acyl donor, but not acyl-CoA or acyl-ACP. This chain is Glycerol-3-phosphate acyltransferase, found in Gluconobacter oxydans (strain 621H) (Gluconobacter suboxydans).